A 998-amino-acid polypeptide reads, in one-letter code: MADRKANGGGASASSSGTNLLFSSSATEFSFNVPFIPVTQAAASPASLLLPGEDSTDVGEEDSFLGQTSTHTSTPQTFSYFSQVSSSSDPFGNIGQSPLTTSAMSAGQSALPKPPATLAFTTGSQDALSAFPPSVSKAPGATPPSQMGTSTYSPSQPSSLPPNFGSPPQGIPQQGHNPYRHTPVSSRANPYITPPQLQQCQMPGHSSYPPPSGPPVQTYQMPPGPLPPLPTAMQSPAQQQVPARPAGPLVQGPSPFVLQNQYEPVQPHWFYCKEVEYKQLWMPFSVLDSLNLEEIYNSVQPDPESVVLGTDGGRYDVYLYDRMRKSVYWEEEPTEVRRCTWFYKGDTDSRFIPYTEEFSEKLEAEYKKAVSTNQWHRRLEFPSGETIVMHNPKVIVQFQPSSVPDEWGTTQDGQTRPRVVKRGIDDSLDEIPDGEMPQVDHLVFMVHGIGPVCDLRFRSIIECVDDFRVVSLKLLQTHFKKSVDEGKVSRVEFLPVHWHSALGGHATGVDRNIKKITLPSIGRFRHFTNETLLDVLFYNSPTYCQAIVEKVEVEINRLHSLFMSRNPNFKGKVSVAGHSLGSLILFDILSNQRDMCVSKSPGSVAVSNGVIKHSQFQEKLISEESKLMSDESCDLDVEDEEPLTLHGTLEALSLFDYISTFEKEKIDMESLLMCTVDDLKEMGIPLGPRKKIANFVKLKAAKLEQKKAAAEKKAALAALTKGQDESAPKTKEMASPSSESNESKRKLSVGAYVSSVRVDYESFEVGTGQVSVAYSSLDFEPEIFFALGSPIGMLLTIRGVARIDEKYRLPTCKGFFNIYHPLDPVAYRLEPMIAPDLDLKAVLVPHHKGRKRLHLELKESLSRMGSDLKQGFISSLKSAWQTLNEFARAHTSTTQLQEELEKVANQIKEEEEKQVVEAKKKKESPELSKDEDYLGKVGMLNGGRRIDYVLQEKPIESFNEYLFALQSHLCYWGSEDTALLLLKEIYRTMNISPEQPQH.

The segment at 1–363 is interaction with SEC23A; sequence MADRKANGGG…YTEEFSEKLE (363 aa). Residues 50 to 246 are disordered; that stretch reads LPGEDSTDVG…AQQQVPARPA (197 aa). Residues 54–63 show a composition bias toward acidic residues; the sequence is DSTDVGEEDS. Residues 65 to 78 are compositionally biased toward polar residues; it reads LGQTSTHTSTPQTF. Low complexity predominate over residues 79–88; the sequence is SYFSQVSSSS. 3 stretches are compositionally biased toward polar residues: residues 94-108, 143-158, and 232-241; these read IGQS…SAGQ, PPSQ…SQPS, and AMQSPAQQQV. At S600 the chain carries Phosphoserine. Residues 640 to 703 enclose the SAM domain; sequence EEPLTLHGTL…NFVKLKAAKL (64 aa). Residues 720–742 are disordered; sequence TKGQDESAPKTKEMASPSSESNE. Residues 722 to 732 are compositionally biased toward basic and acidic residues; it reads GQDESAPKTKE. Residues S735, S748, and S924 each carry the phosphoserine modification. The DDHD domain occupies 777-987; it reads LDFEPEIFFA…ALLLLKEIYR (211 aa).

It belongs to the PA-PLA1 family. In terms of assembly, interacts with SEC23A.

Its subcellular location is the cytoplasmic vesicle. The protein resides in the COPII-coated vesicle membrane. It is found in the endoplasmic reticulum. Its function is as follows. Plays a role in the organization of endoplasmic reticulum exit sites. Specifically binds to phosphatidylinositol 3-phosphate (PI(3)P), phosphatidylinositol 4-phosphate (PI(4)P) and phosphatidylinositol 5-phosphate (PI(5)P). The sequence is that of SEC23-interacting protein (Sec23ip) from Mus musculus (Mouse).